Reading from the N-terminus, the 456-residue chain is Glycosyl hydrolase family 109 protein 2 (456 aa).

Residues 1–33 (MSGFDRRSFLKASMVTAAATALAACASSERATG) constitute a signal peptide (tat-type signal). NAD(+) contacts are provided by residues 63–64 (ER), aspartate 85, 134–137 (WAWH), 154–155 (EV), and asparagine 183. Substrate-binding positions include tyrosine 212, arginine 231, 243–246 (YPTH), and tyrosine 325. An NAD(+)-binding site is contributed by tyrosine 243.

The protein belongs to the Gfo/Idh/MocA family. Glycosyl hydrolase 109 subfamily. It depends on NAD(+) as a cofactor. Post-translationally, predicted to be exported by the Tat system. The position of the signal peptide cleavage has not been experimentally proven.

Functionally, glycosidase. This is Glycosyl hydrolase family 109 protein 2 from Shewanella sp. (strain MR-4).